A 688-amino-acid chain; its full sequence is Glycine--tRNA ligase beta subunit (688 aa).

This sequence belongs to the class-II aminoacyl-tRNA synthetase family. As to quaternary structure, tetramer of two alpha and two beta subunits.

It localises to the cytoplasm. It carries out the reaction tRNA(Gly) + glycine + ATP = glycyl-tRNA(Gly) + AMP + diphosphate. This is Glycine--tRNA ligase beta subunit from Shewanella sp. (strain MR-4).